Consider the following 310-residue polypeptide: Vomeronasal type-1 receptor 90 (310 aa).

At 1–20 (MRRISTLYGVVDKQAIFFSE) the chain is on the extracellular side. The helical transmembrane segment at 21 to 41 (VVIGISFNSILFLFHIFQFLL) threads the bilayer. At 42–46 (ERRLR) the chain is on the cytoplasmic side. The chain crosses the membrane as a helical span at residues 47 to 67 (ITDLIISLLALIHLGMLTVMG). The Extracellular portion of the chain corresponds to 68–93 (FRAVDIFASQNVWNDIKCKSLAHLHR). Cys85 and Cys172 form a disulfide bridge. Residues 94-114 (LLRGLSLCATCLLSIFQAITL) form a helical membrane-spanning segment. Over 115-135 (SPRSSCLAKFKYKSTQHSLCS) the chain is Cytoplasmic. A helical transmembrane segment spans residues 136–156 (LLVLWAFYMSCGTHYSFTIVA). At 157–183 (DYNFSSRSLIFVTESCIILPMDYITRH) the chain is on the extracellular side. A glycan (N-linked (GlcNAc...) asparagine) is linked at Asn159. A helical transmembrane segment spans residues 184–204 (LFFILGIFRDVSFIGLMALSS). Residues 205–238 (GYMVALLCRHRKQAQHLHRTSLSPKASPEQRATR) are Cytoplasmic-facing. Residues 239-259 (TILLLMSFFVLMYCLDCTISA) form a helical membrane-spanning segment. Residues 260 to 271 (SRLMHNGEPIHH) lie on the Extracellular side of the membrane. Residues 272–292 (SIQMMVSNSYATLSPLLLIVT) traverse the membrane as a helical segment. Residues 293-310 (ENRISRFLKSLLGRTVDA) lie on the Cytoplasmic side of the membrane.

This sequence belongs to the G-protein coupled receptor 1 family. As to expression, expressed in 1-4% of neurons of the vomeronasal organ. Only one pheromone receptor gene may be expressed in a particular neuron. Not expressed in the main olfactory epithelium.

It is found in the cell membrane. In terms of biological role, putative pheromone receptor implicated in the regulation of social as well as reproductive behavior. In Rattus norvegicus (Rat), this protein is Vomeronasal type-1 receptor 90 (Vom1r90).